The primary structure comprises 88 residues: MAASVPPGGQRILQKRRQAQSIKEKQAKQTPTSTRQAGYGGSSSSILKLYTDEANGFRVDSLVVLFLSVGFIFSVIALHLLTKFTHII.

Residues 1-42 (MAASVPPGGQRILQKRRQAQSIKEKQAKQTPTSTRQAGYGGS) form a disordered region. Residues 1–61 (MAASVPPGGQ…DEANGFRVDS (61 aa)) lie on the Cytoplasmic side of the membrane. Positions 28–42 (KQTPTSTRQAGYGGS) are enriched in polar residues. A helical transmembrane segment spans residues 62–82 (LVVLFLSVGFIFSVIALHLLT).

Belongs to the SEC61-beta family. As to quaternary structure, component of the heterotrimeric Ssh1 complex, which is composed of SSH1, SBH2 and SSS1.

The protein resides in the endoplasmic reticulum membrane. Functionally, part of the Ssh1 complex, which probably is the major component of a channel-forming translocon complex that may function exclusively in the cotranslational pathway of protein endoplasmic reticulum (ER) import. This is Protein transport protein SBH2 (SBH2) from Saccharomyces cerevisiae (strain ATCC 204508 / S288c) (Baker's yeast).